Reading from the N-terminus, the 154-residue chain is MIMGQLMNMRELFNKKKLHALVFSMWCVNLHASSLSDGIAIEPFEINAKSNRFVEFKVYNNTDEDYIVTQKVVSEENSIKKAKIPFVVNPPIRLLRKRSDAAMGIIYLNEGEVFDKKRKYYLSVSFIPKKKDSDDLGFNIIFTQQIAVKLSALN.

It belongs to the periplasmic pilus chaperone family.

Functionally, could be required for the biogenesis of a putative fimbria. This is Protein FasC (fasC) from Escherichia coli.